Here is a 471-residue protein sequence, read N- to C-terminus: G2/mitotic-specific cyclin-1 (471 aa).

It belongs to the cyclin family. Cyclin AB subfamily.

Its function is as follows. Essential for the control of the cell cycle at the G2/M (mitosis) transition. Interacts with the CDC2 protein kinase to form MPF. G2/M cyclins accumulate steadily during G2 and are abruptly destroyed at mitosis. The polypeptide is G2/mitotic-specific cyclin-1 (CLB1) (Saccharomyces cerevisiae (strain ATCC 204508 / S288c) (Baker's yeast)).